Consider the following 383-residue polypeptide: N-acetyldiaminopimelate deacetylase (383 aa).

The active site involves D72. Residue E131 is the Proton acceptor of the active site.

Belongs to the peptidase M20A family. N-acetyldiaminopimelate deacetylase subfamily.

It catalyses the reaction N-acetyl-(2S,6S)-2,6-diaminopimelate + H2O = (2S,6S)-2,6-diaminopimelate + acetate. It functions in the pathway amino-acid biosynthesis; L-lysine biosynthesis via DAP pathway; LL-2,6-diaminopimelate from (S)-tetrahydrodipicolinate (acetylase route): step 3/3. Functionally, catalyzes the conversion of N-acetyl-diaminopimelate to diaminopimelate and acetate. This chain is N-acetyldiaminopimelate deacetylase, found in Lacticaseibacillus paracasei (strain ATCC 334 / BCRC 17002 / CCUG 31169 / CIP 107868 / KCTC 3260 / NRRL B-441) (Lactobacillus paracasei).